Reading from the N-terminus, the 212-residue chain is Pyridoxine/pyridoxamine 5'-phosphate oxidase (212 aa).

Substrate is bound by residues 8-11 (RREY) and Lys-66. Residues 61–66 (RIVLLK), 76–77 (FT), Arg-82, Lys-83, and Gln-105 contribute to the FMN site. Tyr-123, Arg-127, and Ser-131 together coordinate substrate. FMN-binding positions include 140–141 (QS) and Trp-185. 191–193 (RLH) serves as a coordination point for substrate. An FMN-binding site is contributed by Arg-195.

Belongs to the pyridoxamine 5'-phosphate oxidase family. Homodimer. Requires FMN as cofactor.

It carries out the reaction pyridoxamine 5'-phosphate + O2 + H2O = pyridoxal 5'-phosphate + H2O2 + NH4(+). It catalyses the reaction pyridoxine 5'-phosphate + O2 = pyridoxal 5'-phosphate + H2O2. It participates in cofactor metabolism; pyridoxal 5'-phosphate salvage; pyridoxal 5'-phosphate from pyridoxamine 5'-phosphate: step 1/1. It functions in the pathway cofactor metabolism; pyridoxal 5'-phosphate salvage; pyridoxal 5'-phosphate from pyridoxine 5'-phosphate: step 1/1. Its function is as follows. Catalyzes the oxidation of either pyridoxine 5'-phosphate (PNP) or pyridoxamine 5'-phosphate (PMP) into pyridoxal 5'-phosphate (PLP). This chain is Pyridoxine/pyridoxamine 5'-phosphate oxidase, found in Shewanella baltica (strain OS223).